Reading from the N-terminus, the 144-residue chain is Transcriptional regulator SlyA (144 aa).

An HTH marR-type domain is found at 2-135 (ESPLGSDLAR…LSNMIAKLEK (134 aa)). The segment at residues 49–72 (QIQLAKAIGIEQPSLVRTLDQLEE) is a DNA-binding region (H-T-H motif).

Belongs to the SlyA family. As to quaternary structure, homodimer.

Transcription regulator that can specifically activate or repress expression of target genes. In Sodalis glossinidius (strain morsitans), this protein is Transcriptional regulator SlyA.